Here is a 563-residue protein sequence, read N- to C-terminus: Arginine--tRNA ligase (563 aa).

The 'HIGH' region motif lies at 120–130; the sequence is PNIAKPFHIGH.

This sequence belongs to the class-I aminoacyl-tRNA synthetase family. Monomer.

The protein resides in the cytoplasm. The catalysed reaction is tRNA(Arg) + L-arginine + ATP = L-arginyl-tRNA(Arg) + AMP + diphosphate. This chain is Arginine--tRNA ligase, found in Clostridium botulinum (strain Langeland / NCTC 10281 / Type F).